The primary structure comprises 160 residues: Transcription elongation factor GreA (160 aa).

The stretch at 43–76 (LSENAEYDAAREQQRQLENKIGDLESKLTRATIL) forms a coiled coil.

This sequence belongs to the GreA/GreB family.

Necessary for efficient RNA polymerase transcription elongation past template-encoded arresting sites. The arresting sites in DNA have the property of trapping a certain fraction of elongating RNA polymerases that pass through, resulting in locked ternary complexes. Cleavage of the nascent transcript by cleavage factors such as GreA or GreB allows the resumption of elongation from the new 3'terminus. GreA releases sequences of 2 to 3 nucleotides. The polypeptide is Transcription elongation factor GreA (Chlorobium phaeobacteroides (strain BS1)).